A 311-amino-acid polypeptide reads, in one-letter code: Olfactory receptor 8G1 (311 aa).

At Met1 to Leu25 the chain is on the extracellular side. 2 N-linked (GlcNAc...) asparagine glycosylation sites follow: Asn5 and Asn6. A helical transmembrane segment spans residues Pro26–Thr46. Residues Thr47–His54 lie on the Cytoplasmic side of the membrane. Residues Leu55–Thr75 form a helical membrane-spanning segment. Residues Val76–Thr99 lie on the Extracellular side of the membrane. A disulfide bridge links Cys97 with Cys189. A helical membrane pass occupies residues Gln100 to Tyr120. The Cytoplasmic portion of the chain corresponds to Asp121–Lys139. A helical membrane pass occupies residues Ala140 to Thr160. Residues Gly161–Leu197 are Extracellular-facing. A helical transmembrane segment spans residues Leu198–Ser217. Topologically, residues Tyr218–Ala237 are cytoplasmic. The helical transmembrane segment at Phe238–Met258 threads the bilayer. Topologically, residues Tyr259–Gly271 are extracellular. A helical membrane pass occupies residues Lys272–Leu292. Topologically, residues Arg293–Leu311 are cytoplasmic.

It belongs to the G-protein coupled receptor 1 family.

Its subcellular location is the cell membrane. In terms of biological role, odorant receptor. The protein is Olfactory receptor 8G1 (OR8G1) of Homo sapiens (Human).